Consider the following 518-residue polypeptide: Probable bifunctional methylthioribulose-1-phosphate dehydratase/enolase-phosphatase E1 (518 aa).

A methylthioribulose-1-phosphate dehydratase region spans residues 1 to 247 (MAAAPPAVAV…AIKLHQIGLD (247 aa)). Substrate is bound at residue Cys119. Zn(2+)-binding residues include His137 and His139. The active-site Proton donor/acceptor; for methylthioribulose-1-phosphate dehydratase activity is Glu162. A Zn(2+)-binding site is contributed by His212. The enolase-phosphatase E1 stretch occupies residues 279 to 518 (IVLDIEGTTT…FKTITSFAEI (240 aa)). Residues Asp282 and Glu284 each contribute to the Mg(2+) site. Residues 417-418 (SS) and Lys451 contribute to the substrate site. Asp477 is a binding site for Mg(2+).

In the N-terminal section; belongs to the aldolase class II family. MtnB subfamily. The protein in the C-terminal section; belongs to the HAD-like hydrolase superfamily. MasA/MtnC family. Requires Zn(2+) as cofactor. Mg(2+) is required as a cofactor.

It carries out the reaction 5-(methylsulfanyl)-D-ribulose 1-phosphate = 5-methylsulfanyl-2,3-dioxopentyl phosphate + H2O. The catalysed reaction is 5-methylsulfanyl-2,3-dioxopentyl phosphate + H2O = 1,2-dihydroxy-5-(methylsulfanyl)pent-1-en-3-one + phosphate. It participates in amino-acid biosynthesis; L-methionine biosynthesis via salvage pathway; L-methionine from S-methyl-5-thio-alpha-D-ribose 1-phosphate: step 2/6. The protein operates within amino-acid biosynthesis; L-methionine biosynthesis via salvage pathway; L-methionine from S-methyl-5-thio-alpha-D-ribose 1-phosphate: step 3/6. Its pathway is amino-acid biosynthesis; L-methionine biosynthesis via salvage pathway; L-methionine from S-methyl-5-thio-alpha-D-ribose 1-phosphate: step 4/6. The polypeptide is Probable bifunctional methylthioribulose-1-phosphate dehydratase/enolase-phosphatase E1 (Populus trichocarpa (Western balsam poplar)).